Reading from the N-terminus, the 96-residue chain is MTATLLTAEQLSSVAEKLPGWTLADQRLRRQWRFRNFVEAFGFMTRVALLAEAMNHHPEWSNVYATVTIELTTHDVNGLSDRDLKLAEAINLLEPG.

This sequence belongs to the pterin-4-alpha-carbinolamine dehydratase family.

The catalysed reaction is (4aS,6R)-4a-hydroxy-L-erythro-5,6,7,8-tetrahydrobiopterin = (6R)-L-erythro-6,7-dihydrobiopterin + H2O. The polypeptide is Putative pterin-4-alpha-carbinolamine dehydratase (Prochlorococcus marinus (strain MIT 9303)).